Reading from the N-terminus, the 185-residue chain is Peptidyl-tRNA hydrolase (185 aa).

Tyr-14 contributes to the tRNA binding site. His-19 functions as the Proton acceptor in the catalytic mechanism. TRNA-binding residues include Tyr-65, Asn-67, and Asn-113.

It belongs to the PTH family. As to quaternary structure, monomer.

The protein resides in the cytoplasm. The catalysed reaction is an N-acyl-L-alpha-aminoacyl-tRNA + H2O = an N-acyl-L-amino acid + a tRNA + H(+). Functionally, hydrolyzes ribosome-free peptidyl-tRNAs (with 1 or more amino acids incorporated), which drop off the ribosome during protein synthesis, or as a result of ribosome stalling. Catalyzes the release of premature peptidyl moieties from peptidyl-tRNA molecules trapped in stalled 50S ribosomal subunits, and thus maintains levels of free tRNAs and 50S ribosomes. The sequence is that of Peptidyl-tRNA hydrolase from Rickettsia akari (strain Hartford).